Reading from the N-terminus, the 578-residue chain is Longifolene synthase (578 aa).

3 residues coordinate Mg(2+): aspartate 331, aspartate 335, and aspartate 475. The short motif at 331 to 335 (DDLYD) is the DDXXD motif element.

This sequence belongs to the terpene synthase family. Tpsd subfamily. Requires Mg(2+) as cofactor. The cofactor is Mn(2+).

The protein localises to the cytoplasm. The enzyme catalyses (2E,6E)-farnesyl diphosphate = longifolene + diphosphate. It participates in sesquiterpene biosynthesis. The protein operates within terpene metabolism; oleoresin biosynthesis. In terms of biological role, involved in defensive oleoresin formation in conifers in response to insect attack or other injury. Involved in sesquiterpene (C15) olefins biosynthesis. Produces mainly longifolene, but also multiple minor products including alpha-longipinene, alpha-longicyclene, E-beta-farnesene, longiborneol, cyclosativene, beta-longipinene, and 12 other sesquiterpenes when used with farnesyl diphosphate (FPP) as substrate. The chain is Longifolene synthase (TPS-Lon) from Picea abies (Norway spruce).